The primary structure comprises 164 residues: Single-stranded DNA-binding protein 2 (164 aa).

The region spanning 5 to 109 (INKVILVGNL…IVADEMQMLG (105 aa)) is the SSB domain. The segment at 105-164 (MQMLGGRSDGGGMGGGGERPQRQTSQRQDYAPRRQARQPSQSPQSSPPPMDDFADDDIPF) is disordered. A compositionally biased stretch (gly residues) spans 111–122 (RSDGGGMGGGGE). The short motif at 159–164 (DDDIPF) is the Important for interaction with partner proteins element.

As to quaternary structure, homotetramer.

Plays an important role in DNA replication, recombination and repair. Binds to ssDNA and to an array of partner proteins to recruit them to their sites of action during DNA metabolism. The protein is Single-stranded DNA-binding protein 2 (ssb2) of Xylella fastidiosa (strain 9a5c).